The sequence spans 94 residues: Co-chaperonin GroES (94 aa).

This sequence belongs to the GroES chaperonin family. Heptamer of 7 subunits arranged in a ring. Interacts with the chaperonin GroEL.

The protein resides in the cytoplasm. Together with the chaperonin GroEL, plays an essential role in assisting protein folding. The GroEL-GroES system forms a nano-cage that allows encapsulation of the non-native substrate proteins and provides a physical environment optimized to promote and accelerate protein folding. GroES binds to the apical surface of the GroEL ring, thereby capping the opening of the GroEL channel. The polypeptide is Co-chaperonin GroES (Bacillus cytotoxicus (strain DSM 22905 / CIP 110041 / 391-98 / NVH 391-98)).